Here is a 175-residue protein sequence, read N- to C-terminus: Protein TWIN SISTER of FT (175 aa).

It belongs to the phosphatidylethanolamine-binding protein family.

The protein resides in the cytoplasm. May form complexes with phosphorylated ligands by interfering with kinases and their effectors. This is Protein TWIN SISTER of FT (TSF) from Arabidopsis thaliana (Mouse-ear cress).